The chain runs to 34 residues: Photosystem I reaction center subunit XII (34 aa).

The chain crosses the membrane as a helical span at residues 10-32; that stretch reads IYIALVVAAHAAILALRLSVSLY.

The protein belongs to the PsaM family.

Its subcellular location is the cellular thylakoid membrane. The sequence is that of Photosystem I reaction center subunit XII from Synechococcus sp. (strain RCC307).